A 347-amino-acid polypeptide reads, in one-letter code: Adenine deaminase (347 aa).

Zn(2+) contacts are provided by histidine 16, histidine 18, and histidine 204. Glutamate 207 acts as the Proton donor in catalysis. Aspartate 285 is a binding site for Zn(2+). Substrate is bound at residue aspartate 286.

Belongs to the metallo-dependent hydrolases superfamily. Adenosine and AMP deaminases family. Adenine deaminase type 2 subfamily. Requires Zn(2+) as cofactor. Probably ubiquitinated when cells enter quiescence in response to nutrient limitation, since it is specifically degraded via a process requiring the F-box protein SAF1 and components of the SKP1-Cullin-F-box complex.

It localises to the cytoplasm. Its subcellular location is the nucleus. The catalysed reaction is adenine + H2O + H(+) = hypoxanthine + NH4(+). Its function is as follows. Catalyzes the hydrolytic deamination of adenine to hypoxanthine. Plays an important role in the purine salvage pathway and in nitrogen catabolism. Also exhibits a low activity towards N(6)-substituted adenines that are commonly known as the plant hormones cytokinins. This Saccharomyces cerevisiae (strain ATCC 204508 / S288c) (Baker's yeast) protein is Adenine deaminase.